The primary structure comprises 234 residues: Putative ankyrin repeat protein RF_0063 (234 aa).

2 ANK repeats span residues 149–180 (NNNTALHYAVDKNLEKLSISLINKMSIETISI) and 184–213 (YNNTALHYATDNGLEVISWFLINNMTQKAL).

This is Putative ankyrin repeat protein RF_0063 from Rickettsia felis (strain ATCC VR-1525 / URRWXCal2) (Rickettsia azadi).